We begin with the raw amino-acid sequence, 682 residues long: Serine/threonine-protein kinase PLK2 (682 aa).

The segment at 25-67 is disordered; it reads ACGGDSKKKRPQQPSEDGQSQAQVTPAAPHHHHHHSHSGPEIS. Residues 36 to 48 are compositionally biased toward polar residues; that stretch reads QQPSEDGQSQAQV. Residues 79–331 form the Protein kinase domain; sequence YCRGKVLGKG…LDDIIRHDFF (253 aa). Residues 85 to 93 and Lys-108 each bind ATP; that span reads LGKGGFAKC. The active-site Proton acceptor is the Asp-202. Thr-236 carries the post-translational modification Phosphothreonine. The tract at residues 402 to 430 is disordered; sequence TSITQQPSKHRTDEELQPPPTTFAKSGTS. POLO box domains are found at residues 500–578 and 598–682; these read WVTK…YMEE and YLLQ…QRCN.

This sequence belongs to the protein kinase superfamily. Ser/Thr protein kinase family. CDC5/Polo subfamily. As to quaternary structure, interacts with CIB1. Interacts with NSF; causing NSF dissociation from GRIA2. In terms of processing, catalytic activity is enhanced by phosphorylation of Thr-236.

It localises to the cytoplasm. The protein resides in the cytoskeleton. The protein localises to the microtubule organizing center. It is found in the centrosome. Its subcellular location is the centriole. It localises to the cell projection. The protein resides in the dendrite. The enzyme catalyses L-seryl-[protein] + ATP = O-phospho-L-seryl-[protein] + ADP + H(+). It carries out the reaction L-threonyl-[protein] + ATP = O-phospho-L-threonyl-[protein] + ADP + H(+). Its activity is regulated as follows. Activated by phosphorylation of Thr-236. Once activated, activity is stimulated by binding target proteins. Its function is as follows. Tumor suppressor serine/threonine-protein kinase involved in synaptic plasticity, centriole duplication and G1/S phase transition. Polo-like kinases act by binding and phosphorylating proteins that are already phosphorylated on a specific motif recognized by the POLO box domains. Phosphorylates CPAP, NPM1, RAPGEF2, RASGRF1, SNCA, SIPA1L1 and SYNGAP1. Plays a key role in synaptic plasticity and memory by regulating the Ras and Rap protein signaling: required for overactivity-dependent spine remodeling by phosphorylating the Ras activator RASGRF1 and the Rap inhibitor SIPA1L1 leading to their degradation by the proteasome. Conversely, phosphorylates the Rap activator RAPGEF2 and the Ras inhibitor SYNGAP1, promoting their activity. Also regulates synaptic plasticity independently of kinase activity, via its interaction with NSF that disrupts the interaction between NSF and the GRIA2 subunit of AMPARs, leading to a rapid rundown of AMPAR-mediated current that occludes long term depression. Required for procentriole formation and centriole duplication by phosphorylating CPAP and NPM1, respectively. Its induction by p53/TP53 suggests that it may participate in the mitotic checkpoint following stress. The sequence is that of Serine/threonine-protein kinase PLK2 (Plk2) from Rattus norvegicus (Rat).